The sequence spans 235 residues: Large ribosomal subunit protein uL1 (235 aa).

Residues 1–22 (MSKNSKAYRAAAEKVDRSNPYT) are disordered.

The protein belongs to the universal ribosomal protein uL1 family. Part of the 50S ribosomal subunit.

Its function is as follows. Binds directly to 23S rRNA. The L1 stalk is quite mobile in the ribosome, and is involved in E site tRNA release. Protein L1 is also a translational repressor protein, it controls the translation of the L11 operon by binding to its mRNA. This chain is Large ribosomal subunit protein uL1, found in Mycobacterium ulcerans (strain Agy99).